A 210-amino-acid chain; its full sequence is Large ribosomal subunit protein uL4 (210 aa).

Residues 41-52 (QTNARQGTASTK) show a composition bias toward polar residues. Residues 41–71 (QTNARQGTASTKTRAEVRGGGRKPWRQKGTG) are disordered. A compositionally biased stretch (basic residues) spans 60–71 (GGRKPWRQKGTG).

Belongs to the universal ribosomal protein uL4 family. Part of the 50S ribosomal subunit.

Its function is as follows. One of the primary rRNA binding proteins, this protein initially binds near the 5'-end of the 23S rRNA. It is important during the early stages of 50S assembly. It makes multiple contacts with different domains of the 23S rRNA in the assembled 50S subunit and ribosome. Forms part of the polypeptide exit tunnel. This is Large ribosomal subunit protein uL4 from Trichormus variabilis (strain ATCC 29413 / PCC 7937) (Anabaena variabilis).